The following is an 81-amino-acid chain: Cytochrome c oxidase subunit 7B2, mitochondrial (81 aa).

The N-terminal 25 residues, 1–25 (MMFPLARNALSSLKIQSILQSMARH), are a transit peptide targeting the mitochondrion. At 26 to 33 (SHVKHSPD) the chain is on the mitochondrial matrix side. Residues 34–60 (FHDKYGNAVLASGTAFCVATWVFTATQ) form a helical membrane-spanning segment. Topologically, residues 61–81 (IGIEWNLSPVGRVTPKEWKHQ) are mitochondrial intermembrane.

The protein belongs to the cytochrome c oxidase VIIb family. As to quaternary structure, component of the cytochrome c oxidase (complex IV, CIV), a multisubunit enzyme composed of 14 subunits. The complex is composed of a catalytic core of 3 subunits MT-CO1, MT-CO2 and MT-CO3, encoded in the mitochondrial DNA, and 11 supernumerary subunits COX4I, COX5A, COX5B, COX6A, COX6B, COX6C, COX7A, COX7B, COX7C, COX8 and NDUFA4, which are encoded in the nuclear genome. The complex exists as a monomer or a dimer and forms supercomplexes (SCs) in the inner mitochondrial membrane with NADH-ubiquinone oxidoreductase (complex I, CI) and ubiquinol-cytochrome c oxidoreductase (cytochrome b-c1 complex, complex III, CIII), resulting in different assemblies (supercomplex SCI(1)III(2)IV(1) and megacomplex MCI(2)III(2)IV(2)).

The protein resides in the mitochondrion inner membrane. It functions in the pathway energy metabolism; oxidative phosphorylation. Its function is as follows. Component of the cytochrome c oxidase, the last enzyme in the mitochondrial electron transport chain which drives oxidative phosphorylation. The respiratory chain contains 3 multisubunit complexes succinate dehydrogenase (complex II, CII), ubiquinol-cytochrome c oxidoreductase (cytochrome b-c1 complex, complex III, CIII) and cytochrome c oxidase (complex IV, CIV), that cooperate to transfer electrons derived from NADH and succinate to molecular oxygen, creating an electrochemical gradient over the inner membrane that drives transmembrane transport and the ATP synthase. Cytochrome c oxidase is the component of the respiratory chain that catalyzes the reduction of oxygen to water. Electrons originating from reduced cytochrome c in the intermembrane space (IMS) are transferred via the dinuclear copper A center (CU(A)) of subunit 2 and heme A of subunit 1 to the active site in subunit 1, a binuclear center (BNC) formed by heme A3 and copper B (CU(B)). The BNC reduces molecular oxygen to 2 water molecules using 4 electrons from cytochrome c in the IMS and 4 protons from the mitochondrial matrix. The protein is Cytochrome c oxidase subunit 7B2, mitochondrial (COX7B2) of Homo sapiens (Human).